Reading from the N-terminus, the 259-residue chain is Small ribosomal subunit protein eS4 (259 aa).

Residues 41-105 (LPLSVLLKER…TDQSFRILYD (65 aa)) form the S4 RNA-binding domain. Thr-248 is modified (phosphothreonine). Ser-258 carries the phosphoserine modification.

Belongs to the eukaryotic ribosomal protein eS4 family.

The protein is Small ribosomal subunit protein eS4 of Tetrahymena thermophila.